Consider the following 226-residue polypeptide: uncharacterized protein (226 aa).

The N-acetyltransferase domain maps to 75-226; the sequence is YTIRNVTKDD…KGWLRMVKRI (152 aa).

The protein belongs to the acetyltransferase family.

This is an uncharacterized protein from Methanocaldococcus jannaschii (strain ATCC 43067 / DSM 2661 / JAL-1 / JCM 10045 / NBRC 100440) (Methanococcus jannaschii).